The following is a 308-amino-acid chain: Putative S-adenosyl-L-methionine-dependent methyltransferase Mmcs_1045 (308 aa).

S-adenosyl-L-methionine contacts are provided by residues D133 and D162–L163.

It belongs to the UPF0677 family.

Its function is as follows. Exhibits S-adenosyl-L-methionine-dependent methyltransferase activity. The chain is Putative S-adenosyl-L-methionine-dependent methyltransferase Mmcs_1045 from Mycobacterium sp. (strain MCS).